The primary structure comprises 498 residues: MPLVTRNIEPRHLCRQTLPSVRSELECVTNITLANVIRQLGSLSKYAEDIFGELFTQANTFASRVSSLAERVDRLQVKVTQLDPKEEEVSLQGINTRKAFRSSTIQDQKLFDRNSLPVPVLETYNTCDTPPPLNNLTPYRDDGKEALKFYTDPSYFFDLWKEKMLQDTKDIMKEKRKHRKEKKDNPNRGNVNPRKIKTRKEEWEKMKMGQEFVESKEKLGTSGYPPTLVYQNGSIGCVENVDASSYPPPPQSDSASSPSPSFSEDNLPPPPAEFSYPVDNQRGSGLAGPKRSSVVSPSHPPPAPPLGSPPGPKPGFAPPPAPPPPPPPMIGIPPPPPPVGFGSPGTPPPPSPPSFPPHPDFAAPPPPPPPPAADYPTLPPPPLSQPTGGAPPPPPPPPPPGPPPPPFTGADGQPAIPPPLSDTTKPKSSLPAVSDARSDLLSAIRQGFQLRRVEEQREQEKRDVVGNDVATILSRRIAVEYSDSEDDSSEFDEDDWSD.

Disordered regions lie at residues 173 to 203 (KEKR…KEEW) and 240 to 435 (NVDA…AVSD). Positions 252–263 (SDSASSPSPSFS) are enriched in low complexity. Residues 298-407 (SHPPPAPPLG…PPPGPPPPPF (110 aa)) show a composition bias toward pro residues. Residues 436–453 (ARSDLLSAIRQGFQLRRV) enclose the WH2 domain. Serine 474 carries the post-translational modification Phosphoserine.

This sequence belongs to the SCAR/WAVE family. In terms of assembly, binds actin and the Arp2/3 complex. Interacts with BAIAP2. Component of the WAVE2 complex composed of ABI1, CYFIP1/SRA1, NCKAP1/NAP1 (NCKAP1l/HEM1 in hematopoietic cells) and WASF2/WAVE2. Directly interacts with BRK1. Interacts with FNBP1L (via the SH3 domain). (Microbial infection) Interacts with human cytomegalovirus protein UL135. In terms of tissue distribution, expressed in all tissues with strongest expression in placenta, lung, and peripheral blood leukocytes, but not in skeletal muscle.

The protein localises to the cytoplasm. It localises to the cytoskeleton. The protein resides in the cell projection. It is found in the lamellipodium. Its subcellular location is the basolateral cell membrane. Downstream effector molecule involved in the transmission of signals from tyrosine kinase receptors and small GTPases to the actin cytoskeleton. Promotes formation of actin filaments. Part of the WAVE complex that regulates lamellipodia formation. The WAVE complex regulates actin filament reorganization via its interaction with the Arp2/3 complex. In Homo sapiens (Human), this protein is Actin-binding protein WASF2.